Consider the following 714-residue polypeptide: Fatty acid oxidation complex subunit alpha (714 aa).

The interval 1-190 (MEMASAFTLN…KLGLVDDVVP (190 aa)) is enoyl-CoA hydratase. The 3-hydroxyacyl-CoA dehydrogenase stretch occupies residues 306–714 (APLNSVGILG…FWKTTATDLQ (409 aa)).

It in the N-terminal section; belongs to the enoyl-CoA hydratase/isomerase family. The protein in the central section; belongs to the 3-hydroxyacyl-CoA dehydrogenase family. As to quaternary structure, heterotetramer of two alpha chains (FadJ) and two beta chains (FadI).

The protein localises to the cytoplasm. The catalysed reaction is a (3S)-3-hydroxyacyl-CoA = a (2E)-enoyl-CoA + H2O. The enzyme catalyses a 4-saturated-(3S)-3-hydroxyacyl-CoA = a (3E)-enoyl-CoA + H2O. It catalyses the reaction a (3S)-3-hydroxyacyl-CoA + NAD(+) = a 3-oxoacyl-CoA + NADH + H(+). It carries out the reaction (3S)-3-hydroxybutanoyl-CoA = (3R)-3-hydroxybutanoyl-CoA. The protein operates within lipid metabolism; fatty acid beta-oxidation. In terms of biological role, catalyzes the formation of a hydroxyacyl-CoA by addition of water on enoyl-CoA. Also exhibits 3-hydroxyacyl-CoA epimerase and 3-hydroxyacyl-CoA dehydrogenase activities. The protein is Fatty acid oxidation complex subunit alpha of Escherichia coli O17:K52:H18 (strain UMN026 / ExPEC).